Here is a 161-residue protein sequence, read N- to C-terminus: Protein translocase subunit SecE (161 aa).

The span at 1-12 (MSDEGDVADEAV) shows a compositional bias: acidic residues. The interval 1 to 80 (MSDEGDVADE…GVAKDDSTTK (80 aa)) is disordered. Residues 133 to 153 (VVLAFLAFMVALVAGADLGLT) form a helical membrane-spanning segment.

Belongs to the SecE/SEC61-gamma family. In terms of assembly, component of the Sec protein translocase complex. Heterotrimer consisting of SecY, SecE and SecG subunits. The heterotrimers can form oligomers, although 1 heterotrimer is thought to be able to translocate proteins. Interacts with the ribosome. Interacts with SecDF, and other proteins may be involved. Interacts with SecA.

The protein localises to the cell membrane. Functionally, essential subunit of the Sec protein translocation channel SecYEG. Clamps together the 2 halves of SecY. May contact the channel plug during translocation. This chain is Protein translocase subunit SecE, found in Mycobacterium bovis (strain ATCC BAA-935 / AF2122/97).